Consider the following 510-residue polypeptide: ATP synthase subunit alpha (510 aa).

169-176 lines the ATP pocket; that stretch reads GDRQTGKT.

It belongs to the ATPase alpha/beta chains family. As to quaternary structure, F-type ATPases have 2 components, CF(1) - the catalytic core - and CF(0) - the membrane proton channel. CF(1) has five subunits: alpha(3), beta(3), gamma(1), delta(1), epsilon(1). CF(0) has three main subunits: a(1), b(2) and c(9-12). The alpha and beta chains form an alternating ring which encloses part of the gamma chain. CF(1) is attached to CF(0) by a central stalk formed by the gamma and epsilon chains, while a peripheral stalk is formed by the delta and b chains.

It localises to the cell inner membrane. It catalyses the reaction ATP + H2O + 4 H(+)(in) = ADP + phosphate + 5 H(+)(out). Produces ATP from ADP in the presence of a proton gradient across the membrane. The alpha chain is a regulatory subunit. This Rickettsia conorii (strain ATCC VR-613 / Malish 7) protein is ATP synthase subunit alpha.